Reading from the N-terminus, the 336-residue chain is CASP-like protein UU1 (336 aa).

Topologically, residues 1–170 are cytoplasmic; the sequence is MGKGPGLDPS…PAMESNKDDN (170 aa). Residues 171–191 traverse the membrane as a helical segment; it reads FFGAIVLSLRAAQIVFTVVGL. At 192–222 the chain is on the extracellular side; sequence GVMGSLKHTSHGDYYYYYYDFSFTQVDSYIG. A helical transmembrane segment spans residues 223–243; that stretch reads VLSLDVIVCLYAIVQLVLCFI. Topologically, residues 244–261 are cytoplasmic; that stretch reads QRSNQGKYLSSPTTVAAK. A helical membrane pass occupies residues 262–282; that stretch reads LTFVFDQVLAYALVATAGAAA. Residues 283–307 are Extracellular-facing; sequence GSALEIRKGTSCSGTWTVICSKGEA. A helical membrane pass occupies residues 308–328; it reads SVAMSFFAFAFLAATAAVYSV. The Cytoplasmic segment spans residues 329-336; sequence RLLRITGR.

It belongs to the Casparian strip membrane proteins (CASP) family. Homodimer and heterodimers.

The protein resides in the cell membrane. The protein is CASP-like protein UU1 of Physcomitrium patens (Spreading-leaved earth moss).